The following is a 700-amino-acid chain: Phenoloxidase 8 (700 aa).

The propeptide occupies 1–51 (MATLTQKFHGLLQHPLEPLFLPKNDGTLFYDLPERFLTSRYSPIGQNLANR). N64 and N198 each carry an N-linked (GlcNAc...) asparagine glycan. Cu cation-binding residues include H223, H227, and H252. The N-linked (GlcNAc...) asparagine glycan is linked to N295. E364 serves as the catalytic Proton acceptor. Residues H379, H383, and H419 each contribute to the Cu cation site. N-linked (GlcNAc...) asparagine glycans are attached at residues N445, N507, and N565. 2 disulfides stabilise this stretch: C592–C636 and C594–C643.

The protein belongs to the tyrosinase family. In terms of assembly, homodimer. Requires Cu(2+) as cofactor. In terms of processing, upon activation, a trypsin type protease cleaves prophenol oxidase to yield the active enzyme.

The protein localises to the secreted. The catalysed reaction is 2 tyramine + O2 = 2 dopamine. The enzyme catalyses 2 dopamine + O2 = 2 dopamine quinone + 2 H2O. In terms of biological role, this is a copper-containing oxidase that functions in the formation of pigments such as melanins and other polyphenolic compounds. Catalyzes the oxidation of o-diphenols such as dopamine. Also oxidizes monophenols such as tyramine. This Anopheles gambiae (African malaria mosquito) protein is Phenoloxidase 8.